A 485-amino-acid chain; its full sequence is Dual specificity protein phosphatase CDC14B (485 aa).

Residues 1–38 form a disordered region; sequence MKRKSERRSAWATAPPCSRRSSSSSPGVKKSRSSTPQE. Residues 1 to 54 carry the Nucleolar localization signal motif; sequence MKRKSERRSAWATAPPCSRRSSSSSPGVKKSRSSTPQELHRLEQQDDLYLDITD. Over residues 15–28 the composition is skewed to low complexity; sequence PPCSRRSSSSSPGV. Residues 44-198 are a; it reads QQDDLYLDIT…AMQYGFFNFN (155 aa). The tract at residues 199-212 is linker; the sequence is SFNLDEYEHYEKAE. Residues 213–379 form a b region; sequence NGDFNWIIPE…EGDYFRQKLR (167 aa). The Tyrosine-protein phosphatase domain maps to 215–374; it reads DFNWIIPERF…SSLWLEGDYF (160 aa). The active-site Phosphocysteine intermediate is the C314. Residues 402–424 form a disordered region; sequence LNGLENQDNQEPEPYSDDDEVSG. A compositionally biased stretch (acidic residues) spans 409-422; that stretch reads DNQEPEPYSDDDEV.

Belongs to the protein-tyrosine phosphatase family. Non-receptor class CDC14 subfamily. As to quaternary structure, interacts with FZR1/CDH1.

The protein localises to the nucleus. Its subcellular location is the nucleolus. It localises to the nucleoplasm. The enzyme catalyses O-phospho-L-tyrosyl-[protein] + H2O = L-tyrosyl-[protein] + phosphate. It carries out the reaction O-phospho-L-seryl-[protein] + H2O = L-seryl-[protein] + phosphate. It catalyses the reaction O-phospho-L-threonyl-[protein] + H2O = L-threonyl-[protein] + phosphate. Functionally, dual-specificity phosphatase involved in DNA damage response. Essential regulator of the G2 DNA damage checkpoint: following DNA damage, translocates to the nucleus and dephosphorylates FZR1/CDH1, a key activator of the anaphase promoting complex/cyclosome (APC/C). Dephosphorylates SIRT2 around early anaphase. Dephosphorylation of FZR1/CDH1 activates the APC/C, leading to the ubiquitination of PLK1, preventing entry into mitosis. Preferentially dephosphorylates proteins modified by proline-directed kinases. This chain is Dual specificity protein phosphatase CDC14B (Cdc14b), found in Mus musculus (Mouse).